The chain runs to 121 residues: Protein TCL1B5 (121 aa).

Belongs to the TCL1 family.

This chain is Protein TCL1B5 (Tcl1b5), found in Mus musculus (Mouse).